Reading from the N-terminus, the 336-residue chain is Dihydroorotate dehydrogenase (quinone) (336 aa).

FMN contacts are provided by residues 62–66 and Thr-86; that span reads AGMDK. Lys-66 is a substrate binding site. Substrate is bound at residue 111 to 115; the sequence is NRMGF. Asn-139 and Asn-172 together coordinate FMN. Position 172 (Asn-172) interacts with substrate. Ser-175 (nucleophile) is an active-site residue. Asn-177 lines the substrate pocket. Residues Lys-217 and Thr-245 each coordinate FMN. A substrate-binding site is contributed by 246–247; it reads NT. Residues Gly-268, Gly-297, and 318-319 contribute to the FMN site; that span reads YS.

It belongs to the dihydroorotate dehydrogenase family. Type 2 subfamily. Monomer. FMN is required as a cofactor.

It localises to the cell membrane. It catalyses the reaction (S)-dihydroorotate + a quinone = orotate + a quinol. The protein operates within pyrimidine metabolism; UMP biosynthesis via de novo pathway; orotate from (S)-dihydroorotate (quinone route): step 1/1. In terms of biological role, catalyzes the conversion of dihydroorotate to orotate with quinone as electron acceptor. This Buchnera aphidicola subsp. Schizaphis graminum (strain Sg) protein is Dihydroorotate dehydrogenase (quinone).